The chain runs to 574 residues: DNA polymerase I (574 aa).

Residues 4–161 (EYVTGEEGLK…ELFPKMRDML (158 aa)) enclose the 3'-5' exonuclease domain.

It belongs to the DNA polymerase type-A family.

It carries out the reaction DNA(n) + a 2'-deoxyribonucleoside 5'-triphosphate = DNA(n+1) + diphosphate. This chain is DNA polymerase I (polA), found in Aquifex aeolicus (strain VF5).